A 489-amino-acid chain; its full sequence is MCNTNMSVSTEGAASTSQIPASEQETLVRPKPLLLKLLKSVGAQNDTYTMKEIIFYIGQYIMTKRLYDEKQQHIVYCSNDLLGDVFGVPSFSVKEHRKIYAMIYRNLVAVSQQDSGTSLSESRRQPEGGSDLKDPLQAPPEEKPSSSDLISRLSTSSRRRSISETEENTDELPGERHRKRRRSLSFDPSLGLCELREMCSGGSSSSSSSSSESTETPSHQDLDDGVSEHSGDCLDQDSVSDQFSVEFEVESLDSEDYSLSDEGHELSDEDDEVYRVTVYQTGESDTDSFEGDPEISLADYWKCTSCNEMNPPLPSHCKRCWTLRENWLPDDKGKDKVEISEKAKLENSAQAEEGLDVPDGKKLTENDAKEPCAEEDSEEKAEQTPLSQESDDYSQPSTSSSIVYSSQESVKELKEETQDKDESVESSFSLNAIEPCVICQGRPKNGCIVHGKTGHLMSCFTCAKKLKKRNKPCPVCRQPIQMIVLTYFN.

The interval 1 to 22 (MCNTNMSVSTEGAASTSQIPAS) is disordered. The tract at residues 1–101 (MCNTNMSVST…SVKEHRKIYA (101 aa)) is sufficient to promote the mitochondrial pathway of apoptosis. A necessary for interaction with USP2 region spans residues 1-110 (MCNTNMSVST…AMIYRNLVAV (110 aa)). The SWIB/MDM2 domain occupies 26 to 109 (TLVRPKPLLL…YAMIYRNLVA (84 aa)). Disordered regions lie at residues 114–183 (DSGT…RRRS) and 197–235 (EMCS…DCLD). The span at 121–145 (ESRRQPEGGSDLKDPLQAPPEEKPS) shows a compositional bias: basic and acidic residues. Residues 146 to 156 (SSDLISRLSTS) are compositionally biased toward low complexity. The tract at residues 147 to 228 (SDLISRLSTS…HQDLDDGVSE (82 aa)) is interaction with PYHIN1 and necessary for interaction with RFFL and RNF34. At S163 the chain carries Phosphoserine; by SGK1. Positions 167–304 (ENTDELPGER…ISLADYWKCT (138 aa)) are interaction with MTBP. A Nuclear localization signal motif is present at residues 176-182 (RHRKRRR). S183 is modified (phosphoserine). Positions 183–195 (SLSFDPSLGLCEL) match the Nuclear export signal motif. Residues 200–216 (SGGSSSSSSSSSESTET) show a composition bias toward low complexity. The ARF-binding stretch occupies residues 208–302 (SSSSESTETP…PEISLADYWK (95 aa)). The segment covering 218–232 (SHQDLDDGVSEHSGD) has biased composition (basic and acidic residues). Residues 221 to 230 (DLDDGVSEHS) form an interaction with USP7 region. Residues S238, S240, S244, S258, and S260 each carry the phosphoserine modification. The segment at 240–329 (SDQFSVEFEV…CWTLRENWLP (90 aa)) is region II. Residues 250–259 (ESLDSEDYSL) show a composition bias toward acidic residues. Positions 250–271 (ESLDSEDYSLSDEGHELSDEDD) are disordered. Positions 274–489 (YRVTVYQTGE…IQMIVLTYFN (216 aa)) are necessary for interaction with USP2. The RanBP2-type zinc-finger motif lies at 297–326 (LADYWKCTSCNEMNPPLPSHCKRCWTLREN). C303, C306, C317, and C320 together coordinate Zn(2+). The tract at residues 342-426 (KAKLENSAQA…TQDKDESVES (85 aa)) is disordered. Residues 358–372 (PDGKKLTENDAKEPC) are compositionally biased toward basic and acidic residues. A compositionally biased stretch (low complexity) spans 393–408 (YSQPSTSSSIVYSSQE). Residues S394 and S406 each carry the phosphoserine; by ATM modification. Positions 409–423 (SVKELKEETQDKDES) are enriched in basic and acidic residues. T417 is modified (phosphothreonine; by ATM). Phosphoserine; by ATM occurs at positions 423 and 427. The RING-type zinc-finger motif lies at 436 to 477 (CVICQGRPKNGCIVHGKTGHLMSCFTCAKKLKKRNKPCPVCR). The short motif at 464-471 (KKLKKRNK) is the Nucleolar localization signal element.

Belongs to the MDM2/MDM4 family. In terms of assembly, interacts with p53/TP53, TP73/p73, RBL5 and RP11. Binds specifically to RNA. Can interact with RB1, E1A-associated protein EP300 and the E2F1 transcription factor. Forms a ternary complex with p53/TP53 and WWOX. Interacts with CDKN2AIP, RFWD3, USP7, PYHIN1 and RBBP6. Interacts with ARRB1 and ARRB2. Interacts with PSMA3. Found in a trimeric complex with MDM2, MDM4 and USP2. Interacts with USP2 (via N-terminus and C-terminus). Interacts with MDM4. Part of a complex with MDM2, DAXX, RASSF1 and USP7. Part of a complex with DAXX, MDM2 and USP7. Interacts directly with DAXX and USP7. Interacts (via C-terminus) with RASSF1 isoform A (via N-terminus); the interaction is independent of TP53. Interacts with APEX1; leading to its ubiquitination and degradation. Interacts with RYBP; this inhibits ubiquitination of TP53. Identified in a complex with RYBP and p53/TP53. Also a component of the TRIM28/KAP1-MDM2-p53/TP53 complex involved in regulating p53/TP53 stabilization and activity. Binds directly both p53/TP53 and TRIM28. Component of the TRIM28/KAP1-ERBB4-MDM2 complex involved in connecting growth factor responses with DNA damage. Interacts directly with both TRIM28 and ERBB4 in the complex. Interacts with DYRK2. Interacts with IGF1R. Interacts with TRIM13; the interaction ubiquitinates MDM2 leading to its proteasomal degradation. Interacts with SNAI1; this interaction promotes SNAI1 ubiquitination. Interacts with NOTCH1 (via intracellular domain). Interacts with FHIT. Interacts with RFFL and RNF34; the interaction stabilizes MDM2. Interacts with CDK5RAP3 and CDKN2A/ARF; form a ternary complex involved in regulation of p53/TP53. Interacts with MTA1. Interacts with AARB2. Interacts with MTBP. Interacts with PML. Interacts with TBRG1. Interacts (via its RanBP2-type zinc finger domain) with RPL11 in the 5S RNP complex composed of 5S RNA, RPL5 and RPL11; this interaction occurs in the nucleoplasm and negatively regulates MDM2-mediated TP53 ubiquitination and degradation. Interacts with ADGRB1; the interaction results in inhibition of MDM2-mediated ubiquitination and degradation of DLG4/PSD95, promoting DLG4 stability and regulating synaptic plasticity. Interacts with RPL23A; this interaction may promote p53/TP53 polyubiquitination. Interacts with NDUFS1. Interacts with MORN3; the interaction enhances the ubiquitination of p53/TP53. In terms of processing, phosphorylation on Ser-163 by SGK1 activates ubiquitination of p53/TP53. Phosphorylated at multiple sites near the RING domain by ATM upon DNA damage; this promotes its ubiquitination and degradation, preventing p53/TP53 degradation. Post-translationally, autoubiquitination leads to proteasomal degradation; resulting in p53/TP53 activation it may be regulated by SFN. Also ubiquitinated by TRIM13. ATM-phosphorylated MDM2 is ubiquitinated by the SCF(FBXO31) complex in response to genotoxic stress, promoting its degradation and p53/TP53-mediated DNA damage response. Deubiquitinated by USP2 leads to its accumulation and increases deubiquitination and degradation of p53/TP53. Deubiquitinated by USP7 leading to its stabilization. In terms of tissue distribution, ubiquitously expressed at low-level throughout embryo development and in adult tissues. MDM2-p90 is much more abundant than MDM2-p76 in testis, brain, heart, and kidney, but in the thymus, spleen, and intestine, the levels of the MDM2 proteins are roughly equivalent.

The protein localises to the nucleus. It localises to the nucleoplasm. It is found in the cytoplasm. The protein resides in the nucleolus. It carries out the reaction S-ubiquitinyl-[E2 ubiquitin-conjugating enzyme]-L-cysteine + [acceptor protein]-L-lysine = [E2 ubiquitin-conjugating enzyme]-L-cysteine + N(6)-ubiquitinyl-[acceptor protein]-L-lysine.. E3 ubiquitin-protein ligase that mediates ubiquitination of p53/TP53, leading to its degradation by the proteasome. Inhibits p53/TP53- and p73/TP73-mediated cell cycle arrest and apoptosis by binding its transcriptional activation domain. Also acts as a ubiquitin ligase E3 toward itself, ARRB1 and ARBB2. Permits the nuclear export of p53/TP53. Promotes proteasome-dependent ubiquitin-independent degradation of retinoblastoma RB1 protein. Inhibits DAXX-mediated apoptosis by inducing its ubiquitination and degradation. Component of the TRIM28/KAP1-MDM2-p53/TP53 complex involved in stabilizing p53/TP53. Also a component of the TRIM28/KAP1-ERBB4-MDM2 complex which links growth factor and DNA damage response pathways. Mediates ubiquitination and subsequent proteasome degradation of DYRK2 in nucleus. Ubiquitinates IGF1R and SNAI1 and promotes them to proteasomal degradation. Ubiquitinates DCX, leading to DCX degradation and reduction of the dendritic spine density of olfactory bulb granule cells. Ubiquitinates DLG4, leading to proteasomal degradation of DLG4 which is required for AMPA receptor endocytosis. Negatively regulates NDUFS1, leading to decreased mitochondrial respiration, marked oxidative stress, and commitment to the mitochondrial pathway of apoptosis. Binds NDUFS1 leading to its cytosolic retention rather than mitochondrial localization resulting in decreased supercomplex assembly (interactions between complex I and complex III), decreased complex I activity, ROS production, and apoptosis. In Mus musculus (Mouse), this protein is E3 ubiquitin-protein ligase Mdm2 (Mdm2).